The chain runs to 782 residues: MRLVYSLIFLLFIPFSHPNPIPIPTISPETTNAYLRAFLPWWPEKTDFTLRTAPTPEESEAEIVGNLLESSGEKENVTEFATEKEEIDPSTLRVHDLPPSPLDEFAPEGSPKSLVASGARSSDGNFIISFDEMGECPRDCSNDLRDALGIILQDMSHVERYRQICGKYTNAITCVNEDTRCNKEDRDMFETMTSGLNYMCVEQKLAFNATIKCIDDEAGVVQSECDTQCQTKNLFMNWMMKTAFQDTIQQGVNGIVGAATGTNANPLAFLQPVAGAAGGAPGGGWADMLANIGQRPPSPQDAQQGFENFRQFTNDLCRIGDCMLDCIRSKFNTRCEGSAGTLLSEVFVRPIAATQNKLSILRPILGTFMPEQCGYLTNNAELKKHRIDATMDEELKRMYAEKIAKEARDRTAQDEILANLVPLDENGVPLPRALPELKSIESPLDVSVKTLDQLILDMYSNNKTEELNISEKNNVTSTFSEPSEKEDEASTTVISVISPLHTNATDSEILEHISEKSTEESSGSSGEMSGDGSDNEASGEGSGEYDASGSSGDNSGEFNSSGSSGEASEEGESSGSEDQGSGNYKMIESIESSGEFSGSSGEGSGDTASSDTSIDDKSIIRSGEGSAESVSEILQEASGEDAPTLTPTSEESTGYKIDHSGFGESSGSSGESIELRDSGEGSAEYDASGSSGDNSGDFNSSGSSGEASGVGESSGSEDQGSGNYKKIEVIESSGDYEFSGSSNESIEQSKEGSAASIYEILQAASGEDTPTLTLLSEDSTGY.

The N-terminal stretch at 1–18 is a signal peptide; that stretch reads MRLVYSLIFLLFIPFSHP. N-linked (GlcNAc...) asparagine glycosylation is found at N76, N208, N462, N468, N474, and N503. The tract at residues 513–726 is disordered; sequence ISEKSTEESS…EDQGSGNYKK (214 aa). Composition is skewed to low complexity over residues 520–532, 548–566, 573–612, 662–672, and 688–722; these read ESSGSSGEMSGDG, SGSSGDNSGEFNSSGSSGE, SSGSEDQGSGNYKMIESIESSGEFSGSSGEGSGDTASSDT, FGESSGSSGES, and SGSSGDNSGDFNSSGSSGEASGVGESSGSEDQGSG. N559 carries an N-linked (GlcNAc...) asparagine glycan. The O-linked (Xyl...) (chondroitin sulfate) serine glycan is linked to S691. N699 carries N-linked (GlcNAc...) asparagine glycosylation. 5 O-linked (Xyl...) (chondroitin sulfate) serine glycosylation sites follow: S701, S704, S708, S714, and S721. A glycan (N-linked (GlcNAc...) asparagine) is linked at N743.

The chain is Chondroitin proteoglycan 4 from Caenorhabditis elegans.